Here is a 284-residue protein sequence, read N- to C-terminus: Tropomyosin alpha-1 chain (284 aa).

Residues methionine 1–lysine 37 are disordered. Residues methionine 1–isoleucine 284 adopt a coiled-coil conformation. Basic and acidic residues predominate over residues lysine 12 to lysine 37.

It belongs to the tropomyosin family. As to quaternary structure, homodimer. Heterodimer of an alpha (TPM1, TPM3 or TPM4) and a beta (TPM2) chain.

It is found in the cytoplasm. Its subcellular location is the cytoskeleton. In terms of biological role, binds to actin filaments in muscle and non-muscle cells. Plays a central role, in association with the troponin complex, in the calcium dependent regulation of vertebrate striated muscle contraction. Smooth muscle contraction is regulated by interaction with caldesmon. In non-muscle cells is implicated in stabilizing cytoskeleton actin filaments. The chain is Tropomyosin alpha-1 chain (tpma) from Danio rerio (Zebrafish).